Reading from the N-terminus, the 381-residue chain is Dual specificity protein phosphatase 6 (381 aa).

The Rhodanese domain maps to 30–148 (GNEQLLLMDC…FQAEFALHCE (119 aa)). The segment at 176 to 203 (SSSDIESDLDRDPNSATDSDGSPLSNSQ) is disordered. Polar residues predominate over residues 189–203 (NSATDSDGSPLSNSQ). In terms of domain architecture, Tyrosine-protein phosphatase spans 206 to 349 (FPVEILPFLY…LLDFERTLGL (144 aa)). The active-site Phosphocysteine intermediate is C293.

This sequence belongs to the protein-tyrosine phosphatase family. Non-receptor class dual specificity subfamily. In terms of assembly, interacts with MAPK1/ERK2. Ubiquitinated by the SCF(FBXO31) complex, leading to its proteasomal degradation. Expressed in lung, heart, brain, and kidney, but not significantly in skeletal muscle or testis.

The protein localises to the cytoplasm. It catalyses the reaction O-phospho-L-tyrosyl-[protein] + H2O = L-tyrosyl-[protein] + phosphate. The enzyme catalyses O-phospho-L-seryl-[protein] + H2O = L-seryl-[protein] + phosphate. The catalysed reaction is O-phospho-L-threonyl-[protein] + H2O = L-threonyl-[protein] + phosphate. Functionally, dual specificity protein phosphatase, which mediates dephosphorylation and inactivation of MAP kinases. Has a specificity for the ERK family. Implicated in muscle and neuronal differentiation. Plays an important role in alleviating chronic postoperative pain. Necessary for the normal dephosphorylation of the long-lasting phosphorylated forms of spinal MAPK1/3 and MAP kinase p38 induced by peripheral surgery, which drives the resolution of acute postoperative allodynia. Also important for dephosphorylation of MAPK1/3 in local wound tissue, which further contributes to resolution of acute pain. The sequence is that of Dual specificity protein phosphatase 6 (Dusp6) from Rattus norvegicus (Rat).